Here is an 863-residue protein sequence, read N- to C-terminus: Leucine--tRNA ligase (863 aa).

A 'HIGH' region motif is present at residues 42–52; the sequence is PYPSGRLHMGH. A 'KMSKS' region motif is present at residues 622 to 626; sequence KMSKS. K625 is a binding site for ATP.

Belongs to the class-I aminoacyl-tRNA synthetase family.

Its subcellular location is the cytoplasm. It catalyses the reaction tRNA(Leu) + L-leucine + ATP = L-leucyl-tRNA(Leu) + AMP + diphosphate. The polypeptide is Leucine--tRNA ligase (Shewanella sediminis (strain HAW-EB3)).